We begin with the raw amino-acid sequence, 174 residues long: Thiol-disulfide oxidoreductase ResA (174 aa).

A helical; Signal-anchor for type II membrane protein transmembrane segment spans residues 11-30 (TAILLVLLAAIGYTIYTNFF). The Thioredoxin domain maps to 36-174 (VAVGSTAPDF…IERHLESIKP (139 aa)). Residues Cys74 and Cys77 are joined by a disulfide bond.

Belongs to the thioredoxin family. ResA subfamily.

The protein resides in the cell membrane. It functions in the pathway protein modification; cytochrome c assembly. In terms of biological role, thiol-disulfide oxidoreductase which is required in disulfide reduction during c-type cytochrome synthesis. May accept reducing equivalents from CcdA, leading to breakage of disulfide bonds in apocytochrome c; following this reduction heme can be covalently attached. In Geobacillus kaustophilus (strain HTA426), this protein is Thiol-disulfide oxidoreductase ResA.